Here is a 397-residue protein sequence, read N- to C-terminus: DNA excision repair protein ERCC-8 (397 aa).

5 WD repeats span residues 41-81, 97-137, 184-224, 243-282, and 332-371; these read IHGS…RQPH, VHKY…AADV, GHRQ…GCLL, AHNG…NTLV, and GHYK…PVPD. Phosphoserine occurs at positions 391, 392, and 393.

As to quaternary structure, part of the CSA complex (also named DCX(ERCC8) complex), a DCX E3 ubiquitin-protein ligase complex containing ERCC8, RBX1, DDB1 and CUL4A; the CSA complex interacts with RNA polymerase II; upon UV irradiation it interacts with the COP9 signalosome and preferentially with the hyperphosphorylated form of RNA polymerase II. Interacts with ERCC6/CSB (via CIM motif); promoting recruitment to lesion-stalled RNA polymerase II (Pol II). Interacts with KIAA1530/UVSSA. Interacts with a subunit of RNA polymerase II TFIIH.

It is found in the nucleus. It localises to the chromosome. Its subcellular location is the nucleus matrix. The protein operates within protein modification; protein ubiquitination. Substrate-recognition component of the CSA complex, a DCX (DDB1-CUL4-X-box) E3 ubiquitin-protein ligase complex, involved in transcription-coupled nucleotide excision repair (TC-NER), a process during which RNA polymerase II-blocking lesions are rapidly removed from the transcribed strand of active genes. Following recruitment to lesion-stalled RNA polymerase II (Pol II), the CSA complex mediates ubiquitination of Pol II subunit POLR2A/RPB1 at 'Lys-1268', a critical TC-NER checkpoint, governing RNA Pol II stability and initiating DNA damage excision by TFIIH recruitment. The CSA complex also promotes the ubiquitination and subsequent proteasomal degradation of ERCC6/CSB in a UV-dependent manner; ERCC6 degradation is essential for the recovery of RNA synthesis after transcription-coupled repair. Also plays a role in DNA double-strand breaks (DSSBs) repair by non-homologous end joining (NHEJ). In Mus musculus (Mouse), this protein is DNA excision repair protein ERCC-8.